Reading from the N-terminus, the 362-residue chain is 3-dehydroquinate synthase (362 aa).

NAD(+) contacts are provided by residues 71–76 (DGEKYK), 105–109 (GVIGD), 129–130 (TT), Lys-142, and Lys-151. Zn(2+) is bound by residues Glu-184, His-248, and His-265.

This sequence belongs to the sugar phosphate cyclases superfamily. Dehydroquinate synthase family. Requires Co(2+) as cofactor. Zn(2+) is required as a cofactor. The cofactor is NAD(+).

Its subcellular location is the cytoplasm. The enzyme catalyses 7-phospho-2-dehydro-3-deoxy-D-arabino-heptonate = 3-dehydroquinate + phosphate. Its pathway is metabolic intermediate biosynthesis; chorismate biosynthesis; chorismate from D-erythrose 4-phosphate and phosphoenolpyruvate: step 2/7. Functionally, catalyzes the conversion of 3-deoxy-D-arabino-heptulosonate 7-phosphate (DAHP) to dehydroquinate (DHQ). The protein is 3-dehydroquinate synthase of Hamiltonella defensa subsp. Acyrthosiphon pisum (strain 5AT).